The following is an 869-amino-acid chain: Aconitate hydratase B (869 aa).

Substrate is bound by residues R191, 244–246 (SSR), 417–419 (QDT), and S501. [4Fe-4S] cluster-binding residues include C713, C772, and C775. Residues R794 and R799 each contribute to the substrate site.

This sequence belongs to the aconitase/IPM isomerase family. Monomer. Requires [4Fe-4S] cluster as cofactor.

It catalyses the reaction citrate = D-threo-isocitrate. The catalysed reaction is (2S,3R)-3-hydroxybutane-1,2,3-tricarboxylate = 2-methyl-cis-aconitate + H2O. Its pathway is carbohydrate metabolism; tricarboxylic acid cycle; isocitrate from oxaloacetate: step 2/2. It functions in the pathway organic acid metabolism; propanoate degradation. Its function is as follows. Involved in the catabolism of short chain fatty acids (SCFA) via the tricarboxylic acid (TCA)(acetyl degradation route) and probably via the 2-methylcitrate cycle I (propionate degradation route). Catalyzes the reversible isomerization of citrate to isocitrate via cis-aconitate. Catalyzes the hydration of 2-methyl-cis-aconitate to yield (2R,3S)-2-methylisocitrate. The apo form of AcnB functions as a RNA-binding regulatory protein. The polypeptide is Aconitate hydratase B (acnB) (Pseudomonas aeruginosa (strain ATCC 15692 / DSM 22644 / CIP 104116 / JCM 14847 / LMG 12228 / 1C / PRS 101 / PAO1)).